A 239-amino-acid polypeptide reads, in one-letter code: SkfA peptide export ATP-binding protein SkfE (239 aa).

Residues 4-232 (MQVQNLSKCY…AEWRKEVIRL (229 aa)) enclose the ABC transporter domain. 36–43 (GPNGAGKT) serves as a coordination point for ATP.

This sequence belongs to the ABC transporter superfamily. SkfA peptide export (TC 3.A.1.128.1) family.

It localises to the cell membrane. The enzyme catalyses sulfate(out) + ATP + H2O = sulfate(in) + ADP + phosphate + H(+). It carries out the reaction thiosulfate(out) + ATP + H2O = thiosulfate(in) + ADP + phosphate + H(+). Probably part of the ABC transporter SkfEF involved in the export of the bacteriocin SKF. Probably responsible for energy coupling to the transport system. This Bacillus subtilis (strain 168) protein is SkfA peptide export ATP-binding protein SkfE.